Consider the following 246-residue polypeptide: Small ribosomal subunit protein uS3A (246 aa).

Residues 21 to 92 (LNEFLTRELA…SVELYAEKVA (72 aa)) enclose the KH type-2 domain. The disordered stretch occupies residues 215–246 (DEIVPTTPISEQKAAKPDQPQPPAMPQPVATA).

The protein belongs to the universal ribosomal protein uS3 family.

Its subcellular location is the cytoplasm. The protein localises to the nucleus. It is found in the nucleolus. It localises to the mitochondrion inner membrane. The protein resides in the cytoskeleton. Its subcellular location is the spindle. It catalyses the reaction 2'-deoxyribonucleotide-(2'-deoxyribose 5'-phosphate)-2'-deoxyribonucleotide-DNA = a 3'-end 2'-deoxyribonucleotide-(2,3-dehydro-2,3-deoxyribose 5'-phosphate)-DNA + a 5'-end 5'-phospho-2'-deoxyribonucleoside-DNA + H(+). Component of the small ribosomal subunit. The ribosome is a large ribonucleoprotein complex responsible for the synthesis of proteins in the cell. Has endonuclease activity and plays a role in repair of damaged DNA. Also involved in other processes including regulation of transcription, translation of its cognate mRNA, spindle formation and chromosome movement during mitosis, and apoptosis. The protein is Small ribosomal subunit protein uS3A (rps3-a) of Xenopus laevis (African clawed frog).